Reading from the N-terminus, the 230-residue chain is UPF0173 metal-dependent hydrolase TM1040_1920 (230 aa).

This sequence belongs to the UPF0173 family.

This is UPF0173 metal-dependent hydrolase TM1040_1920 from Ruegeria sp. (strain TM1040) (Silicibacter sp.).